The primary structure comprises 239 residues: Ribonuclease 3 (239 aa).

The 124-residue stretch at 18-141 folds into the RNase III domain; that stretch reads YLTLEKALGY…LMAGVYLEAG (124 aa). Glu-54 contributes to the Mg(2+) binding site. The active site involves Asp-58. Residues Ser-127 and Glu-130 each coordinate Mg(2+). Glu-130 is an active-site residue. Residues 168–237 enclose the DRBM domain; the sequence is DYKTALQELT…AYQALQKLKE (70 aa).

It belongs to the ribonuclease III family. As to quaternary structure, homodimer. Requires Mg(2+) as cofactor.

The protein resides in the cytoplasm. It catalyses the reaction Endonucleolytic cleavage to 5'-phosphomonoester.. Its function is as follows. Digests double-stranded RNA. Involved in the processing of primary rRNA transcript to yield the immediate precursors to the large and small rRNAs (23S and 16S). Processes some mRNAs, and tRNAs when they are encoded in the rRNA operon. Processes pre-crRNA and tracrRNA of type II CRISPR loci if present in the organism. This chain is Ribonuclease 3, found in Helicobacter pylori (strain P12).